Here is a 146-residue protein sequence, read N- to C-terminus: Hydroxyproline-rich systemin (146 aa).

An N-terminal signal peptide occupies residues 1 to 24 (MISFFRAFFLIIIISFLIFVGAQA). The propeptide occupies 25 to 48 (RTLLGNYHDDEMLIELKLESGNYG). The disordered stretch occupies residues 47-128 (YGRTPYKTPP…PPPPKPQDEQ (82 aa)). 4-hydroxyproline occurs at positions 51, 55, 56, 57, 58, and 63. Pro51, Pro55, Pro56, Pro57, Pro58, and Pro63 each carry an O-linked (Ara...) hydroxyproline glycan. Positions 67–70 (EIVN) are excised as a propeptide. 4-hydroxyproline is present on residues Pro79, Pro80, and Pro82. O-linked (Ara...) hydroxyproline glycosylation is found at Pro79, Pro80, and Pro82. A propeptide spanning residues 86–110 (PIIGQLTTITTTPHHDDTVAAPPVG) is cleaved from the precursor. A 4-hydroxyproline mark is found at Pro119, Pro120, Pro121, and Pro122. O-linked (Ara...) hydroxyproline glycans are attached at residues Pro119, Pro120, Pro121, and Pro122. Positions 131-146 (IIITSSSSTLPLQASY) are excised as a propeptide.

Post-translationally, O-glycosylated; contains pentose side chains. Leaves.

Its subcellular location is the secreted. Its function is as follows. Activates a lipid-based signal transduction pathway in which linolenic acid is converted to jasmonic acid, a potent activator of defense gene transcription. Induces synthesis of proteinase inhibitors I and II in leaves when supplied through cut stems. The chain is Hydroxyproline-rich systemin from Solanum lycopersicum (Tomato).